The chain runs to 425 residues: Glucan endo-1,3-beta-glucosidase 10 (425 aa).

An N-terminal signal peptide occupies residues 1–26 (MASSSLQSLFSLFCLALFSLPLIVSS). E119 (proton donor) is an active-site residue. A glycan (N-linked (GlcNAc...) asparagine) is linked at N124. Catalysis depends on E266, which acts as the Nucleophile. The tract at residues 347-387 (GIKTSSTHSSGSGSSNSTGGSSSGGGGNTGGSSSGGGIYQP) is disordered. Positions 350 to 366 (TSSTHSSGSGSSNSTGG) are enriched in low complexity. The N-linked (GlcNAc...) asparagine glycan is linked to N362. Residues 367–384 (SSSGGGGNTGGSSSGGGI) show a composition bias toward gly residues. S401 is lipidated: GPI-anchor amidated serine. Positions 402–425 (AGGKGRFVECVLFFFLLCIIKLRL) are cleaved as a propeptide — removed in mature form.

Belongs to the glycosyl hydrolase 17 family. In terms of tissue distribution, highly expressed in flowers and siliques.

Its subcellular location is the cell membrane. The protein resides in the cell junction. It is found in the plasmodesma. It carries out the reaction Hydrolysis of (1-&gt;3)-beta-D-glucosidic linkages in (1-&gt;3)-beta-D-glucans.. In terms of biological role, plasmodesmal-associated membrane beta-1,3-glucanase involved in plasmodesmal callose degradation and functions in the gating of plasmodesmata. This chain is Glucan endo-1,3-beta-glucosidase 10, found in Arabidopsis thaliana (Mouse-ear cress).